Consider the following 23-residue polypeptide: Brevinin-1Eb (23 aa).

Cysteine 17 and cysteine 23 are oxidised to a cystine.

It belongs to the frog skin active peptide (FSAP) family. Brevinin subfamily. As to expression, expressed by the skin glands.

It localises to the secreted. Shows antibacterial activity against representative Gram-negative and Gram-positive bacterial species, and a very high hemolytic activity. The chain is Brevinin-1Eb from Pelophylax lessonae (Pool frog).